The primary structure comprises 417 residues: Lissencephaly-1 homolog (417 aa).

One can recognise a LisH domain in the interval 7–39 (QKEELNRAIADYLFANGYVKALNAFREESQLAG). Positions 54 to 86 (TSVIRLQKKVMDLEAKLNEAEKEFQSMQNAIGF) form a coiled coil. 7 WD repeats span residues 120-159 (GHRS…FEHT), 162-203 (GHTD…KTLT), 204-243 (GHDH…CTKT), 246-285 (GHTE…CQVV), 288-340 (GHEH…CLFV), 343-382 (GHDN…CHKT), and 385-417 (AHSH…WDCR).

Belongs to the WD repeat LIS1/nudF family.

It is found in the cytoplasm. It localises to the cytoskeleton. Its subcellular location is the microtubule organizing center. The protein localises to the centrosome. Its function is as follows. Positively regulates the activity of the minus-end directed microtubule motor protein dynein. May enhance dynein-mediated microtubule sliding by targeting dynein to the microtubule plus end. Required for several dynein- and microtubule-dependent processes. The sequence is that of Lissencephaly-1 homolog from Schistosoma mansoni (Blood fluke).